The chain runs to 308 residues: Glutaminase (308 aa).

Residues serine 66, asparagine 117, glutamate 161, asparagine 168, tyrosine 192, tyrosine 244, and valine 262 each contribute to the substrate site.

This sequence belongs to the glutaminase family. As to quaternary structure, homotetramer.

The catalysed reaction is L-glutamine + H2O = L-glutamate + NH4(+). This Cronobacter sakazakii (strain ATCC BAA-894) (Enterobacter sakazakii) protein is Glutaminase.